The following is a 158-amino-acid chain: NADPH-dependent 7-cyano-7-deazaguanine reductase (158 aa).

A compositionally biased stretch (polar residues) spans 1–13; it reads MAKRSNTTMTSAG. The interval 1–37 is disordered; the sequence is MAKRSNTTMTSAGLQLGREVAPPDSPETAKLDRVPNP. The span at 27–37 shows a compositional bias: basic and acidic residues; sequence ETAKLDRVPNP. The active-site Thioimide intermediate is the C56. The active-site Proton donor is the D63. Substrate contacts are provided by residues 78–80 and 97–98; these read VES and HE.

Belongs to the GTP cyclohydrolase I family. QueF type 1 subfamily.

It localises to the cytoplasm. It catalyses the reaction 7-aminomethyl-7-carbaguanine + 2 NADP(+) = 7-cyano-7-deazaguanine + 2 NADPH + 3 H(+). Its pathway is tRNA modification; tRNA-queuosine biosynthesis. Catalyzes the NADPH-dependent reduction of 7-cyano-7-deazaguanine (preQ0) to 7-aminomethyl-7-deazaguanine (preQ1). The protein is NADPH-dependent 7-cyano-7-deazaguanine reductase of Bradyrhizobium sp. (strain ORS 278).